Consider the following 223-residue polypeptide: dITP/XTP pyrophosphatase (223 aa).

Residue 9–14 (TTNQNK) participates in substrate binding. The active-site Proton acceptor is the Asp71. Residue Asp71 coordinates Mg(2+). Substrate-binding positions include Ser72, 152 to 155 (FGYD), Lys175, and 180 to 181 (HR). Residues 203–223 (LSEEKPAKPDHSEFEGNDWSK) are disordered.

It belongs to the HAM1 NTPase family. As to quaternary structure, homodimer. Requires Mg(2+) as cofactor.

The catalysed reaction is XTP + H2O = XMP + diphosphate + H(+). It catalyses the reaction dITP + H2O = dIMP + diphosphate + H(+). The enzyme catalyses ITP + H2O = IMP + diphosphate + H(+). Functionally, pyrophosphatase that catalyzes the hydrolysis of nucleoside triphosphates to their monophosphate derivatives, with a high preference for the non-canonical purine nucleotides XTP (xanthosine triphosphate), dITP (deoxyinosine triphosphate) and ITP. Seems to function as a house-cleaning enzyme that removes non-canonical purine nucleotides from the nucleotide pool, thus preventing their incorporation into DNA/RNA and avoiding chromosomal lesions. This is dITP/XTP pyrophosphatase from Desulfotalea psychrophila (strain LSv54 / DSM 12343).